Here is a 172-residue protein sequence, read N- to C-terminus: Myosin regulatory light polypeptide 9 (172 aa).

The span at 1-16 shows a compositional bias: basic residues; the sequence is MSSKRAKAKTTKKRPQ. The disordered stretch occupies residues 1–20; that stretch reads MSSKRAKAKTTKKRPQRATS. N-acetylserine is present on serine 2. Threonine 19 is modified (phosphothreonine; by MLCK, CIT and ROCK2). Residue serine 20 is modified to Phosphoserine; by CDC42BP, CIT, MLCK, PAK1, ROCK1, ROCK2, DAPK1, DAPK2 and ZIPK/DAPK3. EF-hand domains are found at residues 29 to 64, 98 to 133, and 134 to 169; these read SQIQ…LGKN, DPED…MGDR, and FTDE…GAKD. Ca(2+) contacts are provided by aspartate 42, asparagine 44, aspartate 46, and aspartate 53.

As to quaternary structure, myosin is a hexamer of 2 heavy chains and 4 light chains: interacts with myosin heavy chain MYO19. Interacts with LUZP1; the interaction results in inhibition of phosphorylation of MYL9 by DAPK3. In terms of processing, phosphorylation increases the actin-activated myosin ATPase activity and thereby regulates the contractile activity. It is required to generate the driving force in the migration of the cells but not necessary for localization of myosin-2 at the leading edge. Phosphorylation is required for myotube formation. Phosphorylated by DAPK3; DAPK3-mediated phosphorylation is inhibited by LUZP1. As to expression, smooth muscle tissues and in some, but not all, nonmuscle cells.

It is found in the cytoplasm. The protein resides in the cytoskeleton. The protein localises to the cell cortex. Its function is as follows. Myosin regulatory subunit that plays an important role in regulation of both smooth muscle and nonmuscle cell contractile activity via its phosphorylation. Implicated in cytokinesis, receptor capping, and cell locomotion. In myoblasts, may regulate PIEZO1-dependent cortical actomyosin assembly involved in myotube formation. This chain is Myosin regulatory light polypeptide 9 (MYL9), found in Homo sapiens (Human).